Here is a 303-residue protein sequence, read N- to C-terminus: D-alanine--D-alanine ligase (303 aa).

An ATP-grasp domain is found at 102–298 (RILLAAAGLP…YPELCDWMVR (197 aa)). 128–181 (PLPAPYVIKPVAEGSSVGVEIVRTGDNRRAEIARTWRFGKEALVESFIPGRELT) is an ATP binding site. The Mg(2+) site is built by Asp-251, Glu-265, and Asn-267.

Belongs to the D-alanine--D-alanine ligase family. Mg(2+) serves as cofactor. Mn(2+) is required as a cofactor.

The protein localises to the cytoplasm. It carries out the reaction 2 D-alanine + ATP = D-alanyl-D-alanine + ADP + phosphate + H(+). Its pathway is cell wall biogenesis; peptidoglycan biosynthesis. Cell wall formation. This is D-alanine--D-alanine ligase from Gluconobacter oxydans (strain 621H) (Gluconobacter suboxydans).